The primary structure comprises 215 residues: Small ribosomal subunit protein eS1 (215 aa).

The interval 195 to 215 (SGMQEPQKNEPAPGGEAIAQN) is disordered.

Belongs to the eukaryotic ribosomal protein eS1 family.

This chain is Small ribosomal subunit protein eS1, found in Thermoplasma acidophilum (strain ATCC 25905 / DSM 1728 / JCM 9062 / NBRC 15155 / AMRC-C165).